Here is a 746-residue protein sequence, read N- to C-terminus: Teichoic acid poly(glycerol phosphate) polymerase (746 aa).

Residues 473–477 (WHGTP), Arg-540, 573–574 (PT), 610–612 (RMH), 652–653 (SS), and Asp-657 each bind CDP-glycerol.

Belongs to the CDP-glycerol glycerophosphotransferase family.

Its subcellular location is the cell membrane. The catalysed reaction is 4-O-[(2R)-glycerylphospho]-N-acetyl-beta-D-mannosaminyl-(1-&gt;4)-N-acetyl-alpha-D-glucosaminyl di-trans,octa-cis-undecaprenyl diphosphate + n CDP-glycerol = 4-O-{[(2R)-1-glycerylphospho](n)-(2R)-1-glycerylphospho}-N-acetyl-beta-D-mannosaminyl-(1-&gt;4)-N-acetyl-alpha-D-glucosaminyl undecaprenyl diphosphate + n CMP + n H(+). Its pathway is cell wall biogenesis; poly(glycerol phosphate) teichoic acid biosynthesis. Its function is as follows. Responsible for the polymerization of the main chain of the major teichoic acid by sequential transfer of glycerol phosphate units from CDP-glycerol to the disaccharide linkage unit. Synthesizes polymers of approximately 35 glycerol phosphate units in length. The protein is Teichoic acid poly(glycerol phosphate) polymerase (tagF) of Bacillus subtilis (strain 168).